A 73-amino-acid polypeptide reads, in one-letter code: RNA-binding protein Hfq (73 aa).

The 61-residue stretch at 8 to 68 folds into the Sm domain; it reads DQFLNQIRKD…ISTFAPQKNV (61 aa).

This sequence belongs to the Hfq family. As to quaternary structure, homohexamer.

In terms of biological role, RNA chaperone that binds small regulatory RNA (sRNAs) and mRNAs to facilitate mRNA translational regulation in response to envelope stress, environmental stress and changes in metabolite concentrations. Also binds with high specificity to tRNAs. In Bacillus pumilus (strain SAFR-032), this protein is RNA-binding protein Hfq.